We begin with the raw amino-acid sequence, 284 residues long: Pollen allergen Phl p 5b (284 aa).

The N-terminal stretch at 1-19 (AAAAVPRRGPRGGPGRSYT) is a signal peptide. Residues 1–21 (AAAAVPRRGPRGGPGRSYTAD) are disordered.

The protein belongs to the Poa p IX/Phl p VI allergen family. As to quaternary structure, homodimer; disulfide-linked.

Its function is as follows. Has ribonuclease activity. May be involved in host-pathogen interactions. The polypeptide is Pollen allergen Phl p 5b (Phleum pratense (Common timothy)).